Here is a 357-residue protein sequence, read N- to C-terminus: Holliday junction branch migration complex subunit RuvB (357 aa).

A disordered region spans residues 1 to 20; the sequence is MDDHDDSPVSPSFLKSDGEI. Positions 1–185 are large ATPase domain (RuvB-L); the sequence is MDDHDDSPVS…FGFTGHMDFY (185 aa). ATP contacts are provided by residues Leu24, Arg25, Gly66, Lys69, Thr70, Ser71, 132–134, Arg175, Tyr185, and Arg222; that span reads EDF. Thr70 serves as a coordination point for Mg(2+). The small ATPAse domain (RuvB-S) stretch occupies residues 186 to 256; sequence EPGELLRILE…VARAALEVYD (71 aa). Residues 259–357 form a head domain (RuvB-H) region; sequence TLGLDRLDRA…TSQPTLDLFD (99 aa). Residues Arg314 and Arg319 each coordinate DNA.

This sequence belongs to the RuvB family. Homohexamer. Forms an RuvA(8)-RuvB(12)-Holliday junction (HJ) complex. HJ DNA is sandwiched between 2 RuvA tetramers; dsDNA enters through RuvA and exits via RuvB. An RuvB hexamer assembles on each DNA strand where it exits the tetramer. Each RuvB hexamer is contacted by two RuvA subunits (via domain III) on 2 adjacent RuvB subunits; this complex drives branch migration. In the full resolvosome a probable DNA-RuvA(4)-RuvB(12)-RuvC(2) complex forms which resolves the HJ.

The protein localises to the cytoplasm. It catalyses the reaction ATP + H2O = ADP + phosphate + H(+). Functionally, the RuvA-RuvB-RuvC complex processes Holliday junction (HJ) DNA during genetic recombination and DNA repair, while the RuvA-RuvB complex plays an important role in the rescue of blocked DNA replication forks via replication fork reversal (RFR). RuvA specifically binds to HJ cruciform DNA, conferring on it an open structure. The RuvB hexamer acts as an ATP-dependent pump, pulling dsDNA into and through the RuvAB complex. RuvB forms 2 homohexamers on either side of HJ DNA bound by 1 or 2 RuvA tetramers; 4 subunits per hexamer contact DNA at a time. Coordinated motions by a converter formed by DNA-disengaged RuvB subunits stimulates ATP hydrolysis and nucleotide exchange. Immobilization of the converter enables RuvB to convert the ATP-contained energy into a lever motion, pulling 2 nucleotides of DNA out of the RuvA tetramer per ATP hydrolyzed, thus driving DNA branch migration. The RuvB motors rotate together with the DNA substrate, which together with the progressing nucleotide cycle form the mechanistic basis for DNA recombination by continuous HJ branch migration. Branch migration allows RuvC to scan DNA until it finds its consensus sequence, where it cleaves and resolves cruciform DNA. The chain is Holliday junction branch migration complex subunit RuvB from Nocardia farcinica (strain IFM 10152).